A 450-amino-acid chain; its full sequence is Phosphoglucosamine mutase (450 aa).

The active-site Phosphoserine intermediate is the Ser101. Mg(2+)-binding residues include Ser101, Asp240, Asp242, and Asp244. Ser101 is modified (phosphoserine).

Belongs to the phosphohexose mutase family. The cofactor is Mg(2+). In terms of processing, activated by phosphorylation.

The enzyme catalyses alpha-D-glucosamine 1-phosphate = D-glucosamine 6-phosphate. Its function is as follows. Catalyzes the conversion of glucosamine-6-phosphate to glucosamine-1-phosphate. This chain is Phosphoglucosamine mutase, found in Streptococcus pneumoniae serotype 4 (strain ATCC BAA-334 / TIGR4).